The sequence spans 312 residues: DNA-directed RNA polymerase subunit alpha (312 aa).

The alpha N-terminal domain (alpha-NTD) stretch occupies residues 1 to 229 (MLQYQIERID…ELFQPLATVT (229 aa)). The segment at 240–312 (PSPEAQIPLE…ISIPQSRTSV (73 aa)) is alpha C-terminal domain (alpha-CTD).

The protein belongs to the RNA polymerase alpha chain family. In terms of assembly, in cyanobacteria the RNAP catalytic core is composed of 2 alpha, 1 beta, 1 beta', 1 gamma and 1 omega subunit. When a sigma factor is associated with the core the holoenzyme is formed, which can initiate transcription.

The catalysed reaction is RNA(n) + a ribonucleoside 5'-triphosphate = RNA(n+1) + diphosphate. In terms of biological role, DNA-dependent RNA polymerase catalyzes the transcription of DNA into RNA using the four ribonucleoside triphosphates as substrates. The sequence is that of DNA-directed RNA polymerase subunit alpha from Prochlorococcus marinus (strain MIT 9301).